Reading from the N-terminus, the 252-residue chain is Phosphoribosylformylglycinamidine synthase subunit PurQ (252 aa).

In terms of domain architecture, Glutamine amidotransferase type-1 spans 6–237; sequence VGVVVFPGSN…FAHLAGTKRS (232 aa). Cysteine 89 functions as the Nucleophile in the catalytic mechanism. Catalysis depends on residues histidine 206 and glutamate 208.

As to quaternary structure, part of the FGAM synthase complex composed of 1 PurL, 1 PurQ and 2 PurS subunits.

It is found in the cytoplasm. It catalyses the reaction N(2)-formyl-N(1)-(5-phospho-beta-D-ribosyl)glycinamide + L-glutamine + ATP + H2O = 2-formamido-N(1)-(5-O-phospho-beta-D-ribosyl)acetamidine + L-glutamate + ADP + phosphate + H(+). The enzyme catalyses L-glutamine + H2O = L-glutamate + NH4(+). The protein operates within purine metabolism; IMP biosynthesis via de novo pathway; 5-amino-1-(5-phospho-D-ribosyl)imidazole from N(2)-formyl-N(1)-(5-phospho-D-ribosyl)glycinamide: step 1/2. Its function is as follows. Part of the phosphoribosylformylglycinamidine synthase complex involved in the purines biosynthetic pathway. Catalyzes the ATP-dependent conversion of formylglycinamide ribonucleotide (FGAR) and glutamine to yield formylglycinamidine ribonucleotide (FGAM) and glutamate. The FGAM synthase complex is composed of three subunits. PurQ produces an ammonia molecule by converting glutamine to glutamate. PurL transfers the ammonia molecule to FGAR to form FGAM in an ATP-dependent manner. PurS interacts with PurQ and PurL and is thought to assist in the transfer of the ammonia molecule from PurQ to PurL. This Chlorobaculum parvum (strain DSM 263 / NCIMB 8327) (Chlorobium vibrioforme subsp. thiosulfatophilum) protein is Phosphoribosylformylglycinamidine synthase subunit PurQ.